Consider the following 502-residue polypeptide: Glutamate--tRNA ligase (502 aa).

A 'HIGH' region motif is present at residues 9–19 (PSPTGFPHVGT). The short motif at 250–254 (KLSKR) is the 'KMSKS' region element. Residue Lys253 participates in ATP binding.

It belongs to the class-I aminoacyl-tRNA synthetase family. Glutamate--tRNA ligase type 1 subfamily. As to quaternary structure, monomer.

It localises to the cytoplasm. The enzyme catalyses tRNA(Glu) + L-glutamate + ATP = L-glutamyl-tRNA(Glu) + AMP + diphosphate. Catalyzes the attachment of glutamate to tRNA(Glu) in a two-step reaction: glutamate is first activated by ATP to form Glu-AMP and then transferred to the acceptor end of tRNA(Glu). In Acinetobacter baylyi (strain ATCC 33305 / BD413 / ADP1), this protein is Glutamate--tRNA ligase.